The following is a 252-amino-acid chain: Serine/threonine phosphatase stp (252 aa).

Residues 1–18 (MHAEFRTDRGRIRHHNED) show a composition bias toward basic and acidic residues. The interval 1–23 (MHAEFRTDRGRIRHHNEDNGGVF) is disordered. Positions 2–242 (HAEFRTDRGR…DNITVLLVER (241 aa)) constitute a PPM-type phosphatase domain. The Mn(2+) site is built by Asp36, Gly37, Asp194, and Asp233.

The protein belongs to the PP2C family. It depends on Mn(2+) as a cofactor.

The protein localises to the cytoplasm. The protein resides in the membrane. It carries out the reaction O-phospho-L-seryl-[protein] + H2O = L-seryl-[protein] + phosphate. The enzyme catalyses O-phospho-L-threonyl-[protein] + H2O = L-threonyl-[protein] + phosphate. With respect to regulation, activity not affected by inhibitors of phosphatases of the PPP family such as okadaic acid and cypermethrin, or by inhibitors of phosphatases of the PTP family such as sodium orthovanadate. Protein phosphatase that dephosphorylates EF-Tu. This chain is Serine/threonine phosphatase stp (stp), found in Listeria monocytogenes serovar 1/2a (strain ATCC BAA-679 / EGD-e).